A 394-amino-acid chain; its full sequence is Succinate--CoA ligase [ADP-forming] subunit beta (394 aa).

An ATP-grasp domain is found at 9 to 243 (KDILAGFGIA…YSQLNPLEIA (235 aa)). ATP-binding positions include Lys-45, 52–54 (GRG), Glu-98, Val-101, and Glu-106. Residues Asn-198 and Asp-212 each coordinate Mg(2+). Substrate contacts are provided by residues Asn-263 and 320-322 (GIM).

This sequence belongs to the succinate/malate CoA ligase beta subunit family. In terms of assembly, heterotetramer of two alpha and two beta subunits. It depends on Mg(2+) as a cofactor.

It carries out the reaction succinate + ATP + CoA = succinyl-CoA + ADP + phosphate. It catalyses the reaction GTP + succinate + CoA = succinyl-CoA + GDP + phosphate. The protein operates within carbohydrate metabolism; tricarboxylic acid cycle; succinate from succinyl-CoA (ligase route): step 1/1. Succinyl-CoA synthetase functions in the citric acid cycle (TCA), coupling the hydrolysis of succinyl-CoA to the synthesis of either ATP or GTP and thus represents the only step of substrate-level phosphorylation in the TCA. The beta subunit provides nucleotide specificity of the enzyme and binds the substrate succinate, while the binding sites for coenzyme A and phosphate are found in the alpha subunit. This Pelobacter propionicus (strain DSM 2379 / NBRC 103807 / OttBd1) protein is Succinate--CoA ligase [ADP-forming] subunit beta.